Reading from the N-terminus, the 348-residue chain is Histidinol-phosphate aminotransferase (348 aa).

Lysine 211 is subject to N6-(pyridoxal phosphate)lysine.

The protein belongs to the class-II pyridoxal-phosphate-dependent aminotransferase family. Histidinol-phosphate aminotransferase subfamily. Homodimer. Pyridoxal 5'-phosphate serves as cofactor.

It carries out the reaction L-histidinol phosphate + 2-oxoglutarate = 3-(imidazol-4-yl)-2-oxopropyl phosphate + L-glutamate. Its pathway is amino-acid biosynthesis; L-histidine biosynthesis; L-histidine from 5-phospho-alpha-D-ribose 1-diphosphate: step 7/9. The sequence is that of Histidinol-phosphate aminotransferase from Chlorobaculum tepidum (strain ATCC 49652 / DSM 12025 / NBRC 103806 / TLS) (Chlorobium tepidum).